The sequence spans 173 residues: Copper transport protein ctr5 (173 aa).

The Extracellular portion of the chain corresponds to M1–K54. The helical transmembrane segment at F55 to V75 threads the bilayer. Over Q76–S135 the chain is Cytoplasmic. Residues F136–A156 form a helical membrane-spanning segment. At S157–R173 the chain is on the extracellular side.

It belongs to the copper transporter (Ctr) (TC 1.A.56) family. SLC31A subfamily. Interacts with ctr4.

It localises to the membrane. Required for high affinity copper (probably reduced Cu I) transport into the cell. The chain is Copper transport protein ctr5 (ctr5) from Schizosaccharomyces pombe (strain 972 / ATCC 24843) (Fission yeast).